The following is an 861-amino-acid chain: Probable beta-glucosidase A (861 aa).

Residues 1–19 form the signal peptide; the sequence is MKLSILEAAALTAASVVSA. Asn62, Asn212, and Asn253 each carry an N-linked (GlcNAc...) asparagine glycan. Residue Asp281 is part of the active site. Asn316, Asn323, Asn355, Asn524, Asn543, Asn565, Asn669, and Asn713 each carry an N-linked (GlcNAc...) asparagine glycan. The interval 735-754 is disordered; the sequence is PEGATDGSPQPRLPASGGPG.

It belongs to the glycosyl hydrolase 3 family.

The protein localises to the secreted. It carries out the reaction Hydrolysis of terminal, non-reducing beta-D-glucosyl residues with release of beta-D-glucose.. It functions in the pathway glycan metabolism; cellulose degradation. In terms of biological role, beta-glucosidases are one of a number of cellulolytic enzymes involved in the degradation of cellulosic biomass. Catalyzes the last step releasing glucose from the inhibitory cellobiose. The chain is Probable beta-glucosidase A (bglA) from Aspergillus terreus (strain NIH 2624 / FGSC A1156).